Here is a 202-residue protein sequence, read N- to C-terminus: Translation initiation factor 2 subunit beta (202 aa).

Residues 145–202 form the TRAM domain; that stretch reads AIEEGGTYELRIDAVGSKGDGIAKIDKYTVFVPGATKGDVVKVKIKKISGNLAFSERA.

It belongs to the eIF-2-beta/eIF-5 family. Heterotrimer composed of an alpha, a beta and a gamma chain.

Functionally, eIF-2 functions in the early steps of protein synthesis by forming a ternary complex with GTP and initiator tRNA. The chain is Translation initiation factor 2 subunit beta (eif2b) from Methanosarcina mazei (strain ATCC BAA-159 / DSM 3647 / Goe1 / Go1 / JCM 11833 / OCM 88) (Methanosarcina frisia).